A 330-amino-acid polypeptide reads, in one-letter code: Zinc finger protein sdz-12 (330 aa).

C2H2-type zinc fingers lie at residues 27 to 48 (PQCQ…HMKH), 63 to 85 (FRCE…QITH), 91 to 113 (KKCS…LHNH), 120 to 144 (FDCP…LVNH), and 153 to 176 (APCG…HFDH). The segment covering 183–195 (SAPAPTSSARLSP) has biased composition (low complexity). The interval 183–203 (SAPAPTSSARLSPITVSTSGS) is disordered. The C2H2-type 6 zinc-finger motif lies at 271-293 (FECKHCTIKFHDATMSIMHNALH).

This sequence belongs to the krueppel C2H2-type zinc-finger protein family. Expressed in the somatic gonad.

Together with ehn-3, may play a role in gonadogenesis. The sequence is that of Zinc finger protein sdz-12 from Caenorhabditis elegans.